Here is a 545-residue protein sequence, read N- to C-terminus: Carboxypeptidase N subunit 2 (545 aa).

Positions 1–21 (MLPGAWLLWTSLLLLARPAQP) are cleaved as a signal peptide. Residues 22–49 (CPMGCDCFVQEVFCSDEELATVPLDIPP) enclose the LRRNT domain. Asn74, Asn111, and Asn119 each carry an N-linked (GlcNAc...) asparagine glycan. LRR repeat units follow at residues 98–119 (RLEDLEVTGSSFLNLSTNIFSN), 122–143 (SLGKLTLNFNMLEALPEGLFQH), 146–167 (ALESLHLQGNQLQALPRRLFQP), 170–191 (HLKTLNLAQNLLAQLPEELFHP), 194–215 (SLQTLKLSNNALSGLPQGVFGK), 218–239 (SLQELFLDSNNISELPPQVFSQ), 242–263 (CLERLWLQRNAITHLPLSIFAS), 266–287 (NLTFLSLQWNMLRVLPAGLFAH), 290–311 (CLVGLSLTHNQLETVAEGTFAH), 314–335 (NLRSLMLSYNAITHLPAGIFRD), 338–359 (ELVKLYLGSNNLTALHPALFQN), and 362–383 (KLELLSLSKNQLTTLPEGIFDT). Asn228 is a glycosylation site (N-linked (GlcNAc...) asparagine). Asn266 is a glycosylation site (N-linked (GlcNAc...) asparagine). N-linked (GlcNAc...) asparagine glycans are attached at residues Asn348 and Asn359. The LRRCT domain maps to 395–447 (NPWQCDCHLAYLFNWLQQYTDRLLNIQTYCAGPAYLKGQVVPALNEKQLVCPV). Asn518 is a glycosylation site (N-linked (GlcNAc...) asparagine).

Tetramer of two catalytic chains and two glycosylated inactive chains. In terms of processing, whether or not any Cys residues participate in intrachain bonds is unknown, but they do not form interchain disulfide bonds with the 50 kDa catalytic subunit.

Its subcellular location is the secreted. In terms of biological role, the 83 kDa subunit binds and stabilizes the catalytic subunit at 37 degrees Celsius and keeps it in circulation. Under some circumstances it may be an allosteric modifier of the catalytic subunit. The sequence is that of Carboxypeptidase N subunit 2 (CPN2) from Homo sapiens (Human).